An 884-amino-acid chain; its full sequence is Protein translocase subunit SecA (884 aa).

ATP-binding positions include Q83, 101–105 (GEGKT), and D491.

It belongs to the SecA family.

The protein localises to the plastid. The protein resides in the chloroplast stroma. Its subcellular location is the chloroplast thylakoid membrane. The enzyme catalyses ATP + H2O + cellular proteinSide 1 = ADP + phosphate + cellular proteinSide 2.. Its function is as follows. Has a central role in coupling the hydrolysis of ATP to the transfer of proteins across the thylakoid membrane. This Pyropia yezoensis (Susabi-nori) protein is Protein translocase subunit SecA.